Consider the following 67-residue polypeptide: DNA-directed RNA polymerase subunit omega (67 aa).

The protein belongs to the RNA polymerase subunit omega family. In terms of assembly, the RNAP catalytic core consists of 2 alpha, 1 beta, 1 beta' and 1 omega subunit. When a sigma factor is associated with the core the holoenzyme is formed, which can initiate transcription.

It carries out the reaction RNA(n) + a ribonucleoside 5'-triphosphate = RNA(n+1) + diphosphate. Functionally, promotes RNA polymerase assembly. Latches the N- and C-terminal regions of the beta' subunit thereby facilitating its interaction with the beta and alpha subunits. This chain is DNA-directed RNA polymerase subunit omega, found in Listeria monocytogenes serotype 4a (strain HCC23).